We begin with the raw amino-acid sequence, 535 residues long: Pre-mRNA-splicing factor SLU7-A (535 aa).

The segment at 21-44 (EEARKAGLAPAEVDEDGKEINPHI) is disordered. The CCHC-type zinc finger occupies 96–109 (CQNCGAMTHTAKAC). Residues 176 to 190 (LKKLEEKNNNEKGDD) show a composition bias toward basic and acidic residues. Disordered stretches follow at residues 176 to 204 (LKKL…DLRV) and 489 to 508 (EDLS…NVKY). The span at 191–203 (ANSDGEEDEDDLR) shows a compositional bias: acidic residues. Ser193 is subject to Phosphoserine. A Nuclear localization signal motif is present at residues 486 to 493 (LKKEDLSR). Basic and acidic residues predominate over residues 489–501 (EDLSRREEKDERK).

It belongs to the SLU7 family. In terms of tissue distribution, mainly expressed in tissues undergoing cell proliferation, particularly in lateral organs.

The protein localises to the nucleus. In terms of biological role, participates in the second catalytic step of pre-mRNA splicing, when the free hydroxyl group of exon I attacks the 3'-splice site to generate spliced mRNA and the excised lariat intron. Together with SMP2, involved in the timing of cell cycle arrest during leaf development, in a STRUWWELPETER (SWP) dependent manner; promotes cell proliferation in developing organs. This chain is Pre-mRNA-splicing factor SLU7-A, found in Arabidopsis thaliana (Mouse-ear cress).